Here is a 124-residue protein sequence, read N- to C-terminus: 14 kDa phosphohistidine phosphatase (124 aa).

A substrate-binding site is contributed by Lys20. Residue His52 is the Proton acceptor of the active site. Position 93–95 (93–95 (SMG)) interacts with substrate.

This sequence belongs to the janus family. As to quaternary structure, monomer.

The protein localises to the cytoplasm. It carries out the reaction N(pros)-phospho-L-histidyl-[protein] + H2O = L-histidyl-[protein] + phosphate. It catalyses the reaction N(tele)-phospho-L-histidyl-[protein] + H2O = L-histidyl-[protein] + phosphate. Its function is as follows. Exhibits phosphohistidine phosphatase activity. The protein is 14 kDa phosphohistidine phosphatase (Phpt1) of Mus musculus (Mouse).